A 43-amino-acid polypeptide reads, in one-letter code: Protein PsbN (43 aa).

Residues 7-29 (VAIFLSGLLVSFTGYALYTAFGQ) form a helical membrane-spanning segment.

The protein belongs to the PsbN family.

Its subcellular location is the plastid. The protein localises to the chloroplast thylakoid membrane. In terms of biological role, may play a role in photosystem I and II biogenesis. This Draba nemorosa (Woodland whitlowgrass) protein is Protein PsbN.